The sequence spans 147 residues: Large ribosomal subunit protein uL13 (147 aa).

This sequence belongs to the universal ribosomal protein uL13 family. In terms of assembly, part of the 50S ribosomal subunit.

Its function is as follows. This protein is one of the early assembly proteins of the 50S ribosomal subunit, although it is not seen to bind rRNA by itself. It is important during the early stages of 50S assembly. This chain is Large ribosomal subunit protein uL13, found in Lactobacillus johnsonii (strain CNCM I-12250 / La1 / NCC 533).